Reading from the N-terminus, the 735-residue chain is Alpha-adducin (735 aa).

Met1 bears the N-acetylmethionine mark. Residues 1-11 (MNGDTRAAVVT) are compositionally biased toward low complexity. The interval 1 to 21 (MNGDTRAAVVTSPPPTTAPHK) is disordered. Residues Ser12, Ser59, and Ser64 each carry the phosphoserine modification. A Phosphothreonine modification is found at Thr331. Residues Ser334, Ser353, and Ser355 each carry the phosphoserine modification. At Thr358 the chain carries Phosphothreonine. Phosphoserine occurs at positions 364, 366, 408, and 427. Disordered regions lie at residues 418 to 487 (GHSF…AVPN) and 576 to 735 (RREV…KSDS). Phosphothreonine is present on Thr429. Phosphoserine is present on residues Ser431 and Ser436. Basic and acidic residues predominate over residues 440-455 (QQREKTRWLHSGRGDD). Phosphothreonine; by ROCK2 is present on Thr445. 2 positions are modified to phosphoserine: Ser464 and Ser465. A Phosphothreonine; by ROCK2 modification is found at Thr480. Residue Ser481 is modified to Phosphoserine; by PKA. Basic and acidic residues predominate over residues 576-601 (RREVERKQKGSEENLDETREQKEKSP). Phosphoserine is present on residues Ser586, Ser600, and Ser605. The residue at position 610 (Thr610) is a Phosphothreonine. Residue Ser613 is modified to Phosphoserine. Thr614 bears the Phosphothreonine mark. Positions 698–712 (GSPMDPGSDGSPGKS) are enriched in low complexity. A phosphoserine mark is found at Ser705, Ser708, and Ser712. The span at 713–735 (PSKKKKKFRTPSFLKKSKKKSDS) shows a compositional bias: basic residues. Ser714 carries the phosphoserine; by PKC modification. The interval 715–732 (KKKKKFRTPSFLKKSKKK) is interaction with calmodulin. Position 724 is a phosphoserine; by PKA and PKC (Ser724).

This sequence belongs to the aldolase class II family. Adducin subfamily. In terms of assembly, heterodimer of an alpha and a beta subunit or an alpha and a gamma subunit.

It is found in the cytoplasm. The protein localises to the cytoskeleton. The protein resides in the cell membrane. Its function is as follows. Membrane-cytoskeleton-associated protein that promotes the assembly of the spectrin-actin network. Binds to calmodulin. The chain is Alpha-adducin (Add1) from Mus musculus (Mouse).